The chain runs to 66 residues: MAKASETKTVTVEQIGSPIRRPGDQRATLVGLGLNKRHRRSTLQDTPAVRGMIAKVQHLVRVVADE.

Belongs to the universal ribosomal protein uL30 family. In terms of assembly, part of the 50S ribosomal subunit.

The polypeptide is Large ribosomal subunit protein uL30 (Azorhizobium caulinodans (strain ATCC 43989 / DSM 5975 / JCM 20966 / LMG 6465 / NBRC 14845 / NCIMB 13405 / ORS 571)).